The chain runs to 1297 residues: Cingulin-like protein 1 (1297 aa).

Residues 1–550 (MELYFGEYQH…ELTQQTNEET (550 aa)) form a head region. The ZIM signature appears at 37 to 51 (AGSYGVSIRVQGIDG). Ser113, Ser203, and Ser257 each carry phosphoserine. Disordered stretches follow at residues 161-208 (NEVN…TSED), 245-306 (GVGE…TPTS), 364-396 (KPGL…AFPF), and 428-467 (QRSV…DGKV). Over residues 197–206 (YGSQPNSPTS) the composition is skewed to polar residues. The segment covering 268–283 (ETKKNRPDVLPFRRQD) has biased composition (basic and acidic residues). Phosphoserine is present on residues Ser284, Ser298, and Ser299. Positions 297–306 (SSSSSTTPTS) are enriched in low complexity. Basic residues predominate over residues 367–378 (LQRRGRSGKRNR). A compositionally biased stretch (basic and acidic residues) spans 379–389 (INPDDRKRSRS). A phosphoserine mark is found at Ser389 and Ser392. Residue Ser482 is modified to Phosphoserine. The disordered stretch occupies residues 586-608 (SRAAGSAQGSNQAPNSPSEGNSL). Positions 592-608 (AQGSNQAPNSPSEGNSL) are enriched in polar residues. Residues 604 to 1251 (EGNSLLDQKN…LQGQLNSLKK (648 aa)) are a coiled coil. A phosphoserine mark is found at Ser678 and Ser704. Residues 1259-1297 (SSKVLDDSDDDDLSSDAGSLYEAPLSYAFPKDSTIASQI) form a tail region.

It belongs to the cingulin family. Homodimer or oligomer. Interacts with CD2AP and SH3BP1; probably part of a complex at cell junctions. Widely expressed. Highly expressed in the kidney and lung.

It is found in the cell junction. The protein localises to the tight junction. Functionally, may be involved in anchoring the apical junctional complex, especially tight junctions, to actin-based cytoskeletons. This is Cingulin-like protein 1 from Mus musculus (Mouse).